A 192-amino-acid polypeptide reads, in one-letter code: Ion-translocating oxidoreductase complex subunit B (192 aa).

The segment at 1–26 (MNAIWIAVAAVSLLGLAFGAILGYAS) is hydrophobic. A 4Fe-4S domain is found at 32 to 91 (EDDPVVEKIDEILPQSQCGQCGYPGCRPYAEAISCNGEKINRCAPGGEAVMLKIAELLNV). 12 residues coordinate [4Fe-4S] cluster: cysteine 49, cysteine 52, cysteine 57, cysteine 74, cysteine 117, cysteine 120, cysteine 123, cysteine 127, cysteine 147, cysteine 150, cysteine 153, and cysteine 157. 2 4Fe-4S ferredoxin-type domains span residues 108–137 (MVAF…GATR) and 138–167 (AMHT…LQPV).

Belongs to the 4Fe4S bacterial-type ferredoxin family. RnfB subfamily. The complex is composed of six subunits: RsxA, RsxB, RsxC, RsxD, RsxE and RsxG. [4Fe-4S] cluster is required as a cofactor.

Its subcellular location is the cell inner membrane. Functionally, part of a membrane-bound complex that couples electron transfer with translocation of ions across the membrane. Required to maintain the reduced state of SoxR. This chain is Ion-translocating oxidoreductase complex subunit B, found in Escherichia coli O17:K52:H18 (strain UMN026 / ExPEC).